The chain runs to 33 residues: Photosystem II reaction center protein Psb30 (33 aa).

Residues 5–25 (LIVQLGSLTLITIAGPLIVAL) form a helical membrane-spanning segment.

This sequence belongs to the Psb30/Ycf12 family. PSII is composed of 1 copy each of membrane proteins PsbA, PsbB, PsbC, PsbD, PsbE, PsbF, PsbH, PsbI, PsbJ, PsbK, PsbL, PsbM, PsbT, PsbY, PsbZ, Psb30/Ycf12, peripheral proteins of the oxygen-evolving complex and a large number of cofactors. It forms dimeric complexes.

The protein localises to the plastid. Its subcellular location is the chloroplast thylakoid membrane. A core subunit of photosystem II (PSII), probably helps stabilize the reaction center. The protein is Photosystem II reaction center protein Psb30 of Euglena mutabilis.